Reading from the N-terminus, the 327-residue chain is Leucotoxin LukD (327 aa).

Positions 1–26 are cleaved as a signal peptide; that stretch reads MKIEKLGKSSVASSIALLLLSNTVDA.

Belongs to the aerolysin family. Toxicity requires sequential binding and synergistic association of a class S and a class F component which form heterooligomeric complexes. LukE (class S) associates with LukD (class F). LukD can also associate with HlgA.

It is found in the secreted. Its function is as follows. Part of a bi-component leucotoxin that acts by forming pores in the membrane of the target cells. LukE-LukD is as effective as the Panton-Valentine leucocidin (PVL) for inducing dermonecrosis when injected in the rabbit skin, but not hemolytic and poorly leucotoxic on human blood cells compared to other leucotoxins expressed by S.aureus. HlgA-LukD is a Ca(2+) channel inducer. The chain is Leucotoxin LukD (lukD) from Staphylococcus aureus.